The chain runs to 977 residues: Disks large-associated protein 1 (977 aa).

Disordered regions lie at residues 150–203 (TKSH…GWWS) and 349–371 (KAMG…KVAA). Phosphoserine occurs at positions 169, 356, 359, 362, 366, 383, 412, 415, 419, 422, 431, 503, 510, and 562. T563 is modified (phosphothreonine). 2 positions are modified to phosphoserine: S565 and S589. A Phosphothreonine modification is found at T590. Phosphoserine is present on residues S592 and S595. 2 interaction with DYL2 regions span residues 650 to 661 (LSIGIQVDDAEE) and 672 to 683 (SKFQSVGVQVEE). The interval 899–965 (WKQMDPLDKK…QNSATESAES (67 aa)) is disordered. 2 stretches are compositionally biased toward basic and acidic residues: residues 903–912 (DPLDKKERRA) and 928–943 (IRER…EARK). S932 carries the post-translational modification Phosphoserine. Residues 954–963 (VRQNSATESA) are compositionally biased toward polar residues. Residues 975 to 977 (TRL) carry the PDZ-binding motif.

Belongs to the SAPAP family. Interacts with guanylate kinase-like domain of DLG1, DLG2, DLG3, DLG4 and AIP1. Interacts with the PDZ domain of SHANK1, SHANK2 and SHANK3. Found in a complex with DLG4 and SHANK1, SHANK2 or SHANK3. Found in a complex with DLG4 and BEGAIN. Interacts with DYL2 and LRFN1. Interacts with MPP2 (via the SH3-Guanylate kinase-like sub-module). Post-translationally, ubiquitinated by TRIM3; leading to proteasomal degradation. In terms of tissue distribution, expressed in brain.

The protein resides in the cell membrane. Its subcellular location is the postsynaptic density. The protein localises to the synapse. Part of the postsynaptic scaffold in neuronal cells. This Homo sapiens (Human) protein is Disks large-associated protein 1 (DLGAP1).